Consider the following 187-residue polypeptide: MERCGWVSQDPLYIAYHDNEWGVPETDSKKLFEMICLEGQQAGLSWITVLKKRENYRACFHQFDPVKVAAMQEEDVERLVQDAGIIRHRGKIQAIIGNARAYLQMEQNGEPFVDFVWSFVNHQPQVTQATTLSEIPTSTSASDALSKALKKRGFKFVGTTICYSFMQACGLVNDHVVGCCCYPGNKP.

Zn(2+)-binding residues include C4, H17, H175, and C179.

It carries out the reaction Hydrolysis of alkylated DNA, releasing 3-methyladenine.. Its activity is regulated as follows. Activity is controlled by product inhibition. Its function is as follows. Hydrolysis of the deoxyribose N-glycosidic bond to excise 3-methyladenine from the damaged DNA polymer formed by alkylation lesions. The polypeptide is DNA-3-methyladenine glycosylase 1 (Escherichia coli (strain K12)).